Here is a 127-residue protein sequence, read N- to C-terminus: DNA-directed RNA polymerases I, II, and III subunit RPABC2 (127 aa).

Acidic residues predominate over residues methionine 1–glycine 32. A disordered region spans residues methionine 1–isoleucine 52. The residue at position 2 (serine 2) is an N-acetylserine. Serine 2 is modified (phosphoserine; by CK2).

The protein belongs to the archaeal Rpo6/eukaryotic RPB6 RNA polymerase subunit family. Component of the RNA polymerase I (Pol I), RNA polymerase II (Pol II) and RNA polymerase III (Pol III) complexes consisting of at least 13, 12 and 17 subunits, respectively. Pol I complex consists of a ten-subunit catalytic core composed of POLR1A/RPA1, POLR1B/RPA2, POLR1C/RPAC1, POLR1D/RPAC2, POLR1H/RPA12, POLR2E/RPABC1, POLR2F/RPABC2, POLR2H/RPABC3, POLR2K/RPABC4 and POLR2L/RPABC5; a mobile stalk subunit POLR1F/RPA43 protruding from the core and additional subunits homologous to general transcription factors POLR1E/RPA49 and POLR1G/RPA34. Part of Pol I pre-initiation complex (PIC), in which Pol I core assembles with RRN3 and promoter-bound UTBF and SL1/TIF-IB complex. Pol II complex contains a ten-subunit catalytic core composed of POLR2A/RPB1, POLR2B/RPB2, POLR2C/RPB3, POLR2I/RPB9, POLR2J/RPB11, POLR2E/RPABC1, POLR2F/RPABC2, POLR2H/RPABC3, POLR2K/RPABC4 and POLR2L/RPABC5 and a mobile stalk composed of two subunits POLR2D/RPB4 and POLR2G/RPB7. Part of Pol II(G) complex, in which Pol II core associates with an additional subunit POLR2M; unlike conventional Pol II, Pol II(G) functions as a transcriptional repressor. Part of TBP-based Pol II pre-initiation complex (PIC), in which Pol II core assembles with general transcription factors and other specific initiation factors including GTF2E1, GTF2E2, GTF2F1, GTF2F2, TCEA1, ERCC2, ERCC3, GTF2H2, GTF2H3, GTF2H4, GTF2H5, GTF2A1, GTF2A2, GTF2B and TBP; this large multi-subunit PIC complex mediates DNA unwinding and targets Pol II core to the transcription start site where the first phosphodiester bond forms. Pol III complex consists of a ten-subunit catalytic core composed of POLR3A/RPC1, POLR3B/RPC2, POLR1C/RPAC1, POLR1D/RPAC2, POLR3K/RPC10, POLR2E/RPABC1, POLR2F/RPABC2, POLR2H/RPABC3, POLR2K/RPABC4 and POLR2L/RPABC5; a mobile stalk composed of two subunits POLR3H/RPC8 and CRCP/RPC9, protruding from the core and functioning primarily in transcription initiation; and additional subunits homologous to general transcription factors of the RNA polymerase II machinery, POLR3C/RPC3-POLR3F/RPC6-POLR3G/RPC7 heterotrimer required for transcription initiation and POLR3D/RPC4-POLR3E/RPC5 heterodimer involved in both transcription initiation and termination.

The protein localises to the nucleus. It is found in the nucleolus. Its function is as follows. DNA-dependent RNA polymerase catalyzes the transcription of DNA into RNA using the four ribonucleoside triphosphates as substrates. Common component of RNA polymerases I, II, and III which synthesize ribosomal RNA precursors, mRNA precursors and many functional non-coding RNAs, and small RNAs, such as 5S rRNA and tRNAs, respectively. Pol II is the central component of the basal RNA polymerase II transcription machinery. Pols are composed of mobile elements that move relative to each other. In Pol II, POLR2F/RPABC2 is part of the clamp element and together with parts of POLR2A/RPB1 and POLR2B/RPB2 forms a pocket to which the POLR2D/RPB4-POLR2G/RPB7 subcomplex binds. This chain is DNA-directed RNA polymerases I, II, and III subunit RPABC2 (POLR2F), found in Bos taurus (Bovine).